The sequence spans 91 residues: MSEPDVKSHKIEFPCDDYPIKVIGDTVVGFKDMVIEVLSKHAKVDLSTLAERQSKEGKYTTVQLHIVAESENQLHDINSALRATGIVKMVL.

This sequence belongs to the UPF0250 family.

This is UPF0250 protein PP_4802 from Pseudomonas putida (strain ATCC 47054 / DSM 6125 / CFBP 8728 / NCIMB 11950 / KT2440).